We begin with the raw amino-acid sequence, 183 residues long: ATP synthase subunit delta (183 aa).

Belongs to the ATPase delta chain family. In terms of assembly, F-type ATPases have 2 components, F(1) - the catalytic core - and F(0) - the membrane proton channel. F(1) has five subunits: alpha(3), beta(3), gamma(1), delta(1), epsilon(1). F(0) has three main subunits: a(1), b(2) and c(10-14). The alpha and beta chains form an alternating ring which encloses part of the gamma chain. F(1) is attached to F(0) by a central stalk formed by the gamma and epsilon chains, while a peripheral stalk is formed by the delta and b chains.

It localises to the cell inner membrane. Its function is as follows. F(1)F(0) ATP synthase produces ATP from ADP in the presence of a proton or sodium gradient. F-type ATPases consist of two structural domains, F(1) containing the extramembraneous catalytic core and F(0) containing the membrane proton channel, linked together by a central stalk and a peripheral stalk. During catalysis, ATP synthesis in the catalytic domain of F(1) is coupled via a rotary mechanism of the central stalk subunits to proton translocation. Functionally, this protein is part of the stalk that links CF(0) to CF(1). It either transmits conformational changes from CF(0) to CF(1) or is implicated in proton conduction. This Solidesulfovibrio magneticus (strain ATCC 700980 / DSM 13731 / RS-1) (Desulfovibrio magneticus) protein is ATP synthase subunit delta.